The following is a 347-amino-acid chain: Farnesyl pyrophosphate synthase (347 aa).

Isopentenyl diphosphate-binding residues include lysine 50, arginine 53, and glutamine 88. Mg(2+) is bound by residues aspartate 95 and aspartate 99. Position 104 (arginine 104) interacts with dimethylallyl diphosphate. Arginine 105 provides a ligand contact to isopentenyl diphosphate. Lysine 192, threonine 193, glutamine 232, lysine 249, and lysine 258 together coordinate dimethylallyl diphosphate.

This sequence belongs to the FPP/GGPP synthase family. Interacts with spo9. It depends on Mg(2+) as a cofactor.

The protein localises to the cytoplasm. It localises to the nucleus. It carries out the reaction isopentenyl diphosphate + dimethylallyl diphosphate = (2E)-geranyl diphosphate + diphosphate. The enzyme catalyses isopentenyl diphosphate + (2E)-geranyl diphosphate = (2E,6E)-farnesyl diphosphate + diphosphate. It participates in isoprenoid biosynthesis; farnesyl diphosphate biosynthesis; farnesyl diphosphate from geranyl diphosphate and isopentenyl diphosphate: step 1/1. It functions in the pathway isoprenoid biosynthesis; geranyl diphosphate biosynthesis; geranyl diphosphate from dimethylallyl diphosphate and isopentenyl diphosphate: step 1/1. In terms of biological role, farnesyl pyrophosphate synthase; part of the second module of ergosterol biosynthesis pathway that includes the middle steps of the pathway. Fps1 catalyzes the sequential condensation of isopentenyl pyrophosphate with dimethylallyl pyrophosphate, and then with the resultant geranylpyrophosphate to the ultimate product farnesyl pyrophosphate. The second module is carried out in the vacuole and involves the formation of farnesyl diphosphate, which is also an important intermediate in the biosynthesis of ubiquinone, dolichol, heme and prenylated proteins. Activity by the mevalonate kinase erg12 first converts mevalonate into 5-phosphomevalonate. 5-phosphomevalonate is then further converted to 5-diphosphomevalonate by the phosphomevalonate kinase erg8. The diphosphomevalonate decarboxylase mvd1 then produces isopentenyl diphosphate. The isopentenyl-diphosphate delta-isomerase idi1 then catalyzes the 1,3-allylic rearrangement of the homoallylic substrate isopentenyl (IPP) to its highly electrophilic allylic isomer, dimethylallyl diphosphate (DMAPP). Finally the farnesyl diphosphate synthase fps1 catalyzes the sequential condensation of isopentenyl pyrophosphate with dimethylallyl pyrophosphate, and then with the resultant geranylpyrophosphate to the ultimate product farnesyl pyrophosphate. The chain is Farnesyl pyrophosphate synthase from Schizosaccharomyces pombe (strain 972 / ATCC 24843) (Fission yeast).